Consider the following 135-residue polypeptide: uncharacterized protein (135 aa).

This is an uncharacterized protein from Commelina yellow mottle virus (CoYMV).